We begin with the raw amino-acid sequence, 548 residues long: Glutamate--tRNA ligase (548 aa).

A 'HIGH' region motif is present at residues 102–112 (PSPSGPLHIGH).

The protein belongs to the class-I aminoacyl-tRNA synthetase family. Glutamate--tRNA ligase type 2 subfamily.

The protein localises to the cytoplasm. The catalysed reaction is tRNA(Glu) + L-glutamate + ATP = L-glutamyl-tRNA(Glu) + AMP + diphosphate. In terms of biological role, catalyzes the attachment of glutamate to tRNA(Glu) in a two-step reaction: glutamate is first activated by ATP to form Glu-AMP and then transferred to the acceptor end of tRNA(Glu). The polypeptide is Glutamate--tRNA ligase (Thermoplasma volcanium (strain ATCC 51530 / DSM 4299 / JCM 9571 / NBRC 15438 / GSS1)).